Reading from the N-terminus, the 434-residue chain is Alpha-enolase (434 aa).

Ser40 is a binding site for Mg(2+). Substrate is bound by residues His158 and Glu167. Glu210 (proton donor) is an active-site residue. 3 residues coordinate Mg(2+): Asp245, Glu293, and Asp318. Substrate-binding residues include Glu293 and Asp318. Residue Lys343 is the Proton acceptor of the active site. Substrate is bound by residues 370–373 and Lys394; that span reads SHRS.

The protein belongs to the enolase family. In terms of assembly, homodimer. Mg(2+) is required as a cofactor.

Its subcellular location is the cytoplasm. It carries out the reaction (2R)-2-phosphoglycerate = phosphoenolpyruvate + H2O. It participates in carbohydrate degradation; glycolysis; pyruvate from D-glyceraldehyde 3-phosphate: step 4/5. The protein is Alpha-enolase of Alligator mississippiensis (American alligator).